A 760-amino-acid polypeptide reads, in one-letter code: Mitochondrial intermediate peptidase (760 aa).

The N-terminal 19 residues, 1–19 (MLARSVRTLVVSPKTVFRF), are a transit peptide targeting the mitochondrion. Zn(2+) is bound at residue His543. Glu544 is a catalytic residue. Residue His547 coordinates Zn(2+).

This sequence belongs to the peptidase M3 family. Requires Zn(2+) as cofactor.

Its subcellular location is the mitochondrion matrix. It carries out the reaction Release of an N-terminal octapeptide as second stage of processing of some proteins imported into the mitochondrion.. Cleaves proteins, imported into the mitochondrion, to their mature size. While most mitochondrial precursor proteins are processed to the mature form in one step by mitochondrial processing peptidase (MPP), the sequential cleavage by MIP of an octapeptide after initial processing by MPP is a required step for a subgroup of nuclear-encoded precursor proteins destined for the matrix or the inner membrane. The sequence is that of Mitochondrial intermediate peptidase (OCT1) from Leucoagaricus gongylophorus (Leaf-cutting ant fungus).